The sequence spans 314 residues: GTPase Era (314 aa).

Positions 7-188 (RCGFAAVIGS…REFIAGLMPE (182 aa)) constitute an Era-type G domain. The tract at residues 15–22 (GSPNAGKS) is G1. 15–22 (GSPNAGKS) contributes to the GTP binding site. Positions 41-45 (QTTRF) are G2. The G3 stretch occupies residues 62-65 (DTPG). GTP is bound by residues 62–66 (DTPGV) and 138–141 (NKVD). Residues 138-141 (NKVD) form a G4 region. The tract at residues 167–169 (ISA) is G5. The KH type-2 domain maps to 219–296 (LHEELPYASM…HLFLNVKVDA (78 aa)).

It belongs to the TRAFAC class TrmE-Era-EngA-EngB-Septin-like GTPase superfamily. Era GTPase family. As to quaternary structure, monomer.

Its subcellular location is the cytoplasm. The protein localises to the cell inner membrane. An essential GTPase that binds both GDP and GTP, with rapid nucleotide exchange. Plays a role in 16S rRNA processing and 30S ribosomal subunit biogenesis and possibly also in cell cycle regulation and energy metabolism. This is GTPase Era from Maricaulis maris (strain MCS10) (Caulobacter maris).